We begin with the raw amino-acid sequence, 55 residues long: Large ribosomal subunit protein bL33A (55 aa).

The protein belongs to the bacterial ribosomal protein bL33 family.

The chain is Large ribosomal subunit protein bL33A from Mycobacterium ulcerans (strain Agy99).